The following is a 1413-amino-acid chain: DNA-directed RNA polymerase subunit beta' (1413 aa).

Residues C70, C72, C85, and C88 each coordinate Zn(2+). Residues D460, D462, and D464 each contribute to the Mg(2+) site. Zn(2+) is bound by residues C819, C893, C900, and C903.

This sequence belongs to the RNA polymerase beta' chain family. The RNAP catalytic core consists of 2 alpha, 1 beta, 1 beta' and 1 omega subunit. When a sigma factor is associated with the core the holoenzyme is formed, which can initiate transcription. Requires Mg(2+) as cofactor. Zn(2+) serves as cofactor.

The enzyme catalyses RNA(n) + a ribonucleoside 5'-triphosphate = RNA(n+1) + diphosphate. DNA-dependent RNA polymerase catalyzes the transcription of DNA into RNA using the four ribonucleoside triphosphates as substrates. The chain is DNA-directed RNA polymerase subunit beta' from Burkholderia multivorans (strain ATCC 17616 / 249).